The primary structure comprises 408 residues: Argininosuccinate synthase (408 aa).

14 to 22 serves as a coordination point for ATP; the sequence is AYSGGLDTS. Residues Tyr92 and Ser97 each contribute to the L-citrulline site. Gly122 lines the ATP pocket. 3 residues coordinate L-aspartate: Thr124, Asn128, and Asp129. Asn128 contacts L-citrulline. L-citrulline is bound by residues Arg132, Ser181, Ser190, Glu266, and Tyr278.

Belongs to the argininosuccinate synthase family. Type 1 subfamily. Homotetramer.

It localises to the cytoplasm. The enzyme catalyses L-citrulline + L-aspartate + ATP = 2-(N(omega)-L-arginino)succinate + AMP + diphosphate + H(+). It participates in amino-acid biosynthesis; L-arginine biosynthesis; L-arginine from L-ornithine and carbamoyl phosphate: step 2/3. The protein is Argininosuccinate synthase of Moorella thermoacetica (strain ATCC 39073 / JCM 9320).